The following is a 211-amino-acid chain: Metalloproteinase inhibitor 3 (211 aa).

Positions 1–23 are cleaved as a signal peptide; sequence MTPWLGLVVLLGSWSLGDWGAEA. Position 24 (C24) interacts with Zn(2+). Involved in metalloproteinase-binding stretches follow at residues 24–27 and 88–89; these read CTCS and ES. 6 cysteine pairs are disulfide-bonded: C24–C91, C26–C118, C36–C143, C145–C192, C150–C155, and C163–C184. An NTR domain is found at 24-143; that stretch reads CTCSPSHPQD…GLNYRYHLGC (120 aa). The mediates interaction with EFEMP1 stretch occupies residues 105–188; the sequence is TGRVYDGKMY…SKHYACIRQK (84 aa). N-linked (GlcNAc...) asparagine glycosylation is present at N207.

It belongs to the protease inhibitor I35 (TIMP) family. As to quaternary structure, interacts with EFEMP1. Interacts with KDR.

The protein resides in the secreted. The protein localises to the extracellular space. It localises to the extracellular matrix. Functionally, mediates a variety of processes including matrix regulation and turnover, inflammation, and angiogenesis, through reversible inhibition of zinc protease superfamily enzymes, primarily matrix metalloproteinases (MMPs). Regulates extracellular matrix (ECM) remodeling through inhibition of matrix metalloproteinases (MMP) including MMP-1, MMP-2, MMP-3, MMP-7, MMP-9, MMP-13, MMP-14 and MMP-15. Additionally, modulates the processing of amyloid precursor protein (APP) and apolipoprotein E receptor ApoER2 by inhibiting two alpha-secretases ADAM10 and ADAM17. Functions as a tumor suppressor and a potent inhibitor of angiogenesis. Exerts its anti-angiogenic effect by directly interacting with vascular endothelial growth factor (VEGF) receptor-2/KDR, preventing its binding to the VEGFA ligand. Selectively induces apoptosis in angiogenic endothelial cells through a caspase-independent cell death pathway. Mechanistically, inhibits matrix-induced focal adhesion kinase PTK2 tyrosine phosphorylation and association with paxillin/PXN and disrupts the incorporation of ITGB3, PTK2 and PXN into focal adhesion contacts on the matrix. This chain is Metalloproteinase inhibitor 3 (TIMP3), found in Bos taurus (Bovine).